A 330-amino-acid polypeptide reads, in one-letter code: Complement factor H-related protein 3 (330 aa).

The N-terminal stretch at Met1–Gly18 is a signal peptide. Sushi domains follow at residues Pro22–Leu84, Arg85–Arg142, Arg144–Asn205, Glu208–His266, and Pro267–Glu330. 6 disulfides stabilise this stretch: Cys23-Cys72, Cys55-Cys83, Cys87-Cys129, Cys114-Cys140, Cys146-Cys192, and Cys175-Cys203. Asn108 is a glycosylation site (N-linked (GlcNAc...) asparagine). Residues Asn185 and Asn205 are each glycosylated (N-linked (GlcNAc...) asparagine). Intrachain disulfides connect Cys210-Cys253, Cys239-Cys264, Cys268-Cys319, and Cys302-Cys329. N-linked (GlcNAc...) asparagine glycosylation is present at Asn309.

Expressed by the liver and secreted in plasma.

Its subcellular location is the secreted. Its function is as follows. Might be involved in complement regulation. This chain is Complement factor H-related protein 3 (CFHR3), found in Homo sapiens (Human).